Consider the following 681-residue polypeptide: DNA-directed RNA polymerase subunit beta' (681 aa).

Positions 69, 71, 87, and 90 each coordinate Zn(2+). The Mg(2+) site is built by aspartate 489, aspartate 491, and aspartate 493.

Belongs to the RNA polymerase beta' chain family. RpoC1 subfamily. In terms of assembly, in plastids the minimal PEP RNA polymerase catalytic core is composed of four subunits: alpha, beta, beta', and beta''. When a (nuclear-encoded) sigma factor is associated with the core the holoenzyme is formed, which can initiate transcription. The cofactor is Mg(2+). It depends on Zn(2+) as a cofactor.

Its subcellular location is the plastid. The protein localises to the chloroplast. It carries out the reaction RNA(n) + a ribonucleoside 5'-triphosphate = RNA(n+1) + diphosphate. Functionally, DNA-dependent RNA polymerase catalyzes the transcription of DNA into RNA using the four ribonucleoside triphosphates as substrates. This chain is DNA-directed RNA polymerase subunit beta', found in Cycas taitungensis (Prince sago).